The sequence spans 894 residues: Alpha-actinin-2 (894 aa).

An actin-binding region spans residues 1 to 254; the sequence is MNQIEPGVQY…IMTYVSCFYH (254 aa). Calponin-homology (CH) domains are found at residues 38–142 and 151–257; these read KQQR…LRFA and TSAK…HAFA. At Thr-237 the chain carries Phosphothreonine. Spectrin repeat units follow at residues 281–391, 401–506, 516–627, and 637–740; these read RLME…WLLN, HLAE…ALER, QLHL…SLQE, and RLRR…EVET. 2 consecutive EF-hand domains span residues 753–788 and 789–824; these read EQMNEFRASFNHFDRRKNGLMDHEDFRACLISMGYD and LGEAEFARIMTLVDPNGQGTVTFQSFIDFMTRETAD. Positions 766, 770, 777, 802, 804, and 808 each coordinate Ca(2+).

The protein belongs to the alpha-actinin family. Homodimer; antiparallel. Also forms heterodimers with ACTN3. Interacts with ADAM12, MYOZ1, MYOZ2 and MYOZ3. Interacts via its C-terminal region with the LDB3 PDZ domain. Interacts with XIRP2. Interacts with DST (via N-terminus). Interacts with PARVB. Interacts with SYNPO2. Post-translationally, ubiquitinated by FBXL22, leading to proteasomal degradation.

It is found in the cytoplasm. The protein localises to the myofibril. It localises to the sarcomere. Its subcellular location is the z line. F-actin cross-linking protein which is thought to anchor actin to a variety of intracellular structures. This is a bundling protein. The chain is Alpha-actinin-2 (ACTN2) from Bos taurus (Bovine).